Here is a 484-residue protein sequence, read N- to C-terminus: NADH-ubiquinone oxidoreductase chain 4 (484 aa).

Helical transmembrane passes span Met-1 to Gly-21, Leu-33 to Asp-53, Val-77 to Leu-97, Tyr-109 to Asp-129, Ile-130 to Ile-150, Phe-162 to Ile-182, Leu-206 to Val-226, Pro-236 to Met-256, Phe-270 to Leu-290, Phe-295 to Phe-315, Leu-326 to Val-346, Tyr-365 to Leu-385, Val-405 to Tyr-425, and Phe-448 to Ile-468.

The protein belongs to the complex I subunit 4 family.

Its subcellular location is the mitochondrion inner membrane. It carries out the reaction a ubiquinone + NADH + 5 H(+)(in) = a ubiquinol + NAD(+) + 4 H(+)(out). Functionally, core subunit of the mitochondrial membrane respiratory chain NADH dehydrogenase (Complex I) that is believed to belong to the minimal assembly required for catalysis. Complex I functions in the transfer of electrons from NADH to the respiratory chain. The immediate electron acceptor for the enzyme is believed to be ubiquinone. In Mycosarcoma maydis (Corn smut fungus), this protein is NADH-ubiquinone oxidoreductase chain 4 (ND4).